The sequence spans 748 residues: Peptidyl serine alpha-galactosyltransferase (748 aa).

Residues 1 to 26 form the signal peptide; the sequence is MVAVFHGPLVLGALLLLLALQHGASA. At 27–710 the chain is on the extracellular side; that stretch reads EEPGFANRTG…GPSLHSLLGR (684 aa). N-linked (GlcNAc...) asparagine glycosylation is found at Asn33, Asn184, and Asn297. The 35-residue stretch at 415–449 folds into the ShKT domain; sequence CQDFHPKCEEWKESGECTKNENYMTENCRKTCDKC. Disulfide bonds link Cys415-Cys449, Cys422-Cys442, and Cys431-Cys446. 2 disordered regions span residues 474–576 and 611–670; these read ELQP…ADPK and EVPK…KKNI. The span at 531–565 shows a compositional bias: pro residues; that stretch reads SPPPSPPPASPPPVDSPPPMSPPPESPSPDKPPPK. Basic and acidic residues predominate over residues 611–637; it reads EVPKRTKATDEEEEAPKAKHAESHLTL. The chain crosses the membrane as a helical span at residues 711–731; that stretch reads LNTWQALVLWLVVVVAFLALV. Residues 732-748 are Cytoplasmic-facing; the sequence is PRIAKLRRRQRSGMRTE.

Requires Mn(2+) as cofactor.

The protein localises to the membrane. Its function is as follows. Glycosyltransferase involved in the O-galactosylation of several proteins including extensins. Catalyzes the transfer of alpha-galactosyl to Ser residues. Hydroxylation of proline residues adjacent to the serine acceptor is required for activity. Utilizes selectively UDP-galactose as a donor nucleotide sugar. The protein is Peptidyl serine alpha-galactosyltransferase of Chlamydomonas reinhardtii (Chlamydomonas smithii).